A 242-amino-acid chain; its full sequence is Sec-independent protein translocase protein TatCd (242 aa).

The next 3 membrane-spanning stretches (helical) occupy residues 19–39, 60–80, and 107–127; these read IIVTLAAFFLFLITAFLFVQD, ILWVYMMLSGICAIAASIPVA, and LFALFLAGISFGYFVLFPIVL. Residues 128 to 149 are interaction with TatAd; it reads SFLTHLSSGHFETMFTADRYFR. The helical transmembrane segment at 150-170 threads the bilayer; the sequence is FMVNLSLPFGFLFEMPLVVMF. Positions 171 to 187 are interaction with TatAd; that stretch reads LTRLGILNPYRLAKARK. 2 consecutive transmembrane segments (helical) span residues 188–208 and 209–229; these read LSYFLLIVVSILITPPDFISD and FLVMIPLLVLFEVSVTLSAFV.

It belongs to the TatC family. Forms a complex with TatAd. Two types of complexes exist: one composed of TatAd and TatCd, and another composed only of TatAd.

It localises to the cell membrane. In terms of biological role, part of the twin-arginine translocation (Tat) system that transports large folded proteins containing a characteristic twin-arginine motif in their signal peptide across membranes. Required for PhoD secretion. TatCd promotes membrane localization of TatAd via domain specific interactions. TatCd is required for stabile production of TatAd as well as for its maintenance. This Bacillus subtilis (strain 168) protein is Sec-independent protein translocase protein TatCd.